A 205-amino-acid polypeptide reads, in one-letter code: Large ribosomal subunit protein uL4 (205 aa).

Polar residues predominate over residues 43–60 (ARSGNRAQQTRAEVSAST). A disordered region spans residues 43–96 (ARSGNRAQQTRAEVSASTHKPWRQKGTGRARSGRASSPIWRGGGVTFPNKPNEN). The segment covering 62 to 74 (KPWRQKGTGRARS) has biased composition (basic residues).

The protein belongs to the universal ribosomal protein uL4 family. Part of the 50S ribosomal subunit.

In terms of biological role, one of the primary rRNA binding proteins, this protein initially binds near the 5'-end of the 23S rRNA. It is important during the early stages of 50S assembly. It makes multiple contacts with different domains of the 23S rRNA in the assembled 50S subunit and ribosome. Its function is as follows. Forms part of the polypeptide exit tunnel. The protein is Large ribosomal subunit protein uL4 of Thiobacillus denitrificans (strain ATCC 25259 / T1).